A 372-amino-acid polypeptide reads, in one-letter code: Aminomethyltransferase (372 aa).

Belongs to the GcvT family. In terms of assembly, the glycine cleavage system is composed of four proteins: P, T, L and H.

The enzyme catalyses N(6)-[(R)-S(8)-aminomethyldihydrolipoyl]-L-lysyl-[protein] + (6S)-5,6,7,8-tetrahydrofolate = N(6)-[(R)-dihydrolipoyl]-L-lysyl-[protein] + (6R)-5,10-methylene-5,6,7,8-tetrahydrofolate + NH4(+). In terms of biological role, the glycine cleavage system catalyzes the degradation of glycine. In Burkholderia cenocepacia (strain ATCC BAA-245 / DSM 16553 / LMG 16656 / NCTC 13227 / J2315 / CF5610) (Burkholderia cepacia (strain J2315)), this protein is Aminomethyltransferase.